A 422-amino-acid chain; its full sequence is L-cysteine:1D-myo-inositol 2-amino-2-deoxy-alpha-D-glucopyranoside ligase (422 aa).

Positions 1–34 (MKSWSTPAPPTVPSRPDRLRLHDTATGRTRHPGN) are disordered. The span at 15 to 25 (RPDRLRLHDTA) shows a compositional bias: basic and acidic residues. Cys44 contacts Zn(2+). Residues 44 to 47 (CGIT), Thr59, and 82 to 84 (NVT) contribute to the L-cysteinyl-5'-AMP site. The 'HIGH' region motif lies at 46 to 56 (ITPYDATHLGH). The 'ERGGDP' region signature appears at 196–201 (ERGGDP). L-cysteinyl-5'-AMP is bound at residue Trp237. Residue Cys241 coordinates Zn(2+). 259-261 (GSD) is an L-cysteinyl-5'-AMP binding site. His266 lines the Zn(2+) pocket. Val292 contributes to the L-cysteinyl-5'-AMP binding site. The 'KMSKS' region motif lies at 298-302 (KMSKS).

Belongs to the class-I aminoacyl-tRNA synthetase family. MshC subfamily. In terms of assembly, monomer. The cofactor is Zn(2+).

It catalyses the reaction 1D-myo-inositol 2-amino-2-deoxy-alpha-D-glucopyranoside + L-cysteine + ATP = 1D-myo-inositol 2-(L-cysteinylamino)-2-deoxy-alpha-D-glucopyranoside + AMP + diphosphate + H(+). Its function is as follows. Catalyzes the ATP-dependent condensation of GlcN-Ins and L-cysteine to form L-Cys-GlcN-Ins. In Micrococcus luteus (strain ATCC 4698 / DSM 20030 / JCM 1464 / CCM 169 / CCUG 5858 / IAM 1056 / NBRC 3333 / NCIMB 9278 / NCTC 2665 / VKM Ac-2230) (Micrococcus lysodeikticus), this protein is L-cysteine:1D-myo-inositol 2-amino-2-deoxy-alpha-D-glucopyranoside ligase.